The following is a 339-amino-acid chain: Glycerol-3-phosphate dehydrogenase [NAD(P)+] (339 aa).

NADPH-binding residues include Ser-15, Tyr-16, His-36, and Lys-110. Sn-glycerol 3-phosphate-binding residues include Lys-110, Gly-139, and Thr-141. Residue Ala-143 participates in NADPH binding. Residues Lys-195, Asp-248, Ser-258, Arg-259, and Asn-260 each coordinate sn-glycerol 3-phosphate. Lys-195 acts as the Proton acceptor in catalysis. Arg-259 provides a ligand contact to NADPH. NADPH is bound by residues Val-283 and Glu-285.

Belongs to the NAD-dependent glycerol-3-phosphate dehydrogenase family.

The protein resides in the cytoplasm. It carries out the reaction sn-glycerol 3-phosphate + NAD(+) = dihydroxyacetone phosphate + NADH + H(+). It catalyses the reaction sn-glycerol 3-phosphate + NADP(+) = dihydroxyacetone phosphate + NADPH + H(+). Its pathway is membrane lipid metabolism; glycerophospholipid metabolism. In terms of biological role, catalyzes the reduction of the glycolytic intermediate dihydroxyacetone phosphate (DHAP) to sn-glycerol 3-phosphate (G3P), the key precursor for phospholipid synthesis. In Serratia proteamaculans (strain 568), this protein is Glycerol-3-phosphate dehydrogenase [NAD(P)+].